Reading from the N-terminus, the 94-residue chain is Large ribosomal subunit protein eL14 (94 aa).

It belongs to the eukaryotic ribosomal protein eL14 family.

This Methanopyrus kandleri (strain AV19 / DSM 6324 / JCM 9639 / NBRC 100938) protein is Large ribosomal subunit protein eL14.